Here is a 260-residue protein sequence, read N- to C-terminus: MVKESAEILSEIRKNYILTTMKGGKRIDGRLPDEFREITIIENYVPRANGSAYVALGKTRVVAGVKIEAGEPFPDTPDQGVLTTNVELLPIAFPSFEAGPPNDLAIEVSRVVDRGIRESKMISPDKLVIEQGKKVWIVFLDINVLDYDGNLIDACTIAAVSALRNAIVPASREGGEDFKLPVVNTPISVTMVKIGDTLVCDPSLEEDQICGGRITVTTTEDGHIRAMQKGEIGVFTLDDVKKAIKMSLKVGKNIREKYFR.

Belongs to the RNase PH family. Rrp42 subfamily. Component of the archaeal exosome complex. Forms a hexameric ring-like arrangement composed of 3 Rrp41-Rrp42 heterodimers. The hexameric ring associates with a trimer of Rrp4 and/or Csl4 subunits.

It localises to the cytoplasm. Non-catalytic component of the exosome, which is a complex involved in RNA degradation. Contributes to the structuring of the Rrp41 active site. This Thermoplasma volcanium (strain ATCC 51530 / DSM 4299 / JCM 9571 / NBRC 15438 / GSS1) protein is Exosome complex component Rrp42.